Here is a 262-residue protein sequence, read N- to C-terminus: 3-methyl-2-oxobutanoate hydroxymethyltransferase (262 aa).

Mg(2+) contacts are provided by Asp42 and Asp81. Residues 42 to 43 (DS), Asp81, and Lys110 each bind 3-methyl-2-oxobutanoate. Residue Glu112 participates in Mg(2+) binding. The active-site Proton acceptor is Glu180.

This sequence belongs to the PanB family. Homodecamer; pentamer of dimers. Mg(2+) is required as a cofactor.

It localises to the cytoplasm. It catalyses the reaction 3-methyl-2-oxobutanoate + (6R)-5,10-methylene-5,6,7,8-tetrahydrofolate + H2O = 2-dehydropantoate + (6S)-5,6,7,8-tetrahydrofolate. The protein operates within cofactor biosynthesis; (R)-pantothenate biosynthesis; (R)-pantoate from 3-methyl-2-oxobutanoate: step 1/2. Functionally, catalyzes the reversible reaction in which hydroxymethyl group from 5,10-methylenetetrahydrofolate is transferred onto alpha-ketoisovalerate to form ketopantoate. This is 3-methyl-2-oxobutanoate hydroxymethyltransferase from Legionella pneumophila (strain Lens).